A 188-amino-acid chain; its full sequence is Peptidyl-tRNA hydrolase (188 aa).

Position 15 (Tyr-15) interacts with tRNA. Residue His-20 is the Proton acceptor of the active site. 3 residues coordinate tRNA: Phe-66, Asn-68, and Asn-114.

It belongs to the PTH family. As to quaternary structure, monomer.

The protein localises to the cytoplasm. It carries out the reaction an N-acyl-L-alpha-aminoacyl-tRNA + H2O = an N-acyl-L-amino acid + a tRNA + H(+). In terms of biological role, hydrolyzes ribosome-free peptidyl-tRNAs (with 1 or more amino acids incorporated), which drop off the ribosome during protein synthesis, or as a result of ribosome stalling. Its function is as follows. Catalyzes the release of premature peptidyl moieties from peptidyl-tRNA molecules trapped in stalled 50S ribosomal subunits, and thus maintains levels of free tRNAs and 50S ribosomes. The polypeptide is Peptidyl-tRNA hydrolase (Lactococcus lactis subsp. cremoris (strain MG1363)).